Consider the following 86-residue polypeptide: Large ribosomal subunit protein bL27 (86 aa).

Belongs to the bacterial ribosomal protein bL27 family.

The protein is Large ribosomal subunit protein bL27 of Flavobacterium psychrophilum (strain ATCC 49511 / DSM 21280 / CIP 103535 / JIP02/86).